Reading from the N-terminus, the 454-residue chain is Tubulin beta-3 chain (454 aa).

Residues Gln11, Glu75, Ser144, Gly148, Thr149, Gly150, Asn210, and Asn232 each contribute to the GTP site. Glu75 lines the Mg(2+) pocket. Positions 435–454 (TADDEFDPEVNQEEVEGDCI) are disordered.

Belongs to the tubulin family. As to quaternary structure, dimer of alpha and beta chains. A typical microtubule is a hollow water-filled tube with an outer diameter of 25 nm and an inner diameter of 15 nM. Alpha-beta heterodimers associate head-to-tail to form protofilaments running lengthwise along the microtubule wall with the beta-tubulin subunit facing the microtubule plus end conferring a structural polarity. Microtubules usually have 13 protofilaments but different protofilament numbers can be found in some organisms and specialized cells. Requires Mg(2+) as cofactor.

It localises to the cytoplasm. It is found in the cytoskeleton. Functionally, tubulin is the major constituent of microtubules, a cylinder consisting of laterally associated linear protofilaments composed of alpha- and beta-tubulin heterodimers. Microtubules grow by the addition of GTP-tubulin dimers to the microtubule end, where a stabilizing cap forms. Below the cap, tubulin dimers are in GDP-bound state, owing to GTPase activity of alpha-tubulin. This Drosophila melanogaster (Fruit fly) protein is Tubulin beta-3 chain (betaTub60D).